The following is a 1091-amino-acid chain: Integrin alpha-6 (1091 aa).

A signal peptide spans 1 to 23 (MAVAGQLCLLYLSAGLLARLGTA). The Extracellular portion of the chain corresponds to 24-1011 (FNLDTREDNV…FPSKTVAQYS (988 aa)). FG-GAP repeat units follow at residues 30-95 (EDNV…GPCT), 101-166 (NDAD…IEDD), 176-229 (DGRL…FFDM), 244-300 (DHDE…KSAH), 301-363 (LLPE…KWSN), 364-419 (VKPI…GIIT), and 420-479 (KPTQ…VTPN). An N-linked (GlcNAc...) asparagine glycan is attached at asparagine 78. Cystine bridges form between cysteine 86-cysteine 94, cysteine 131-cysteine 154, and cysteine 175-cysteine 188. N-linked (GlcNAc...) asparagine glycans are attached at residues asparagine 223 and asparagine 284. 4 residues coordinate Ca(2+): aspartate 324, asparagine 326, aspartate 328, and aspartate 332. The N-linked (GlcNAc...) asparagine glycan is linked to asparagine 370. The Ca(2+) site is built by aspartate 386, asparagine 388, aspartate 390, tyrosine 392, aspartate 394, aspartate 441, aspartate 443, asparagine 445, tyrosine 447, and aspartate 449. 4 disulfide bridges follow: cysteine 489/cysteine 496, cysteine 502/cysteine 562, cysteine 626/cysteine 632, and cysteine 726/cysteine 737. Residues asparagine 731, asparagine 746, and asparagine 927 are each glycosylated (N-linked (GlcNAc...) asparagine). Cystine bridges form between cysteine 881–cysteine 928 and cysteine 934–cysteine 939. Residue asparagine 958 is glycosylated (N-linked (GlcNAc...) asparagine). The helical transmembrane segment at 1012-1037 (GVAWWIILLAVLAGILMLALLVFLLW) threads the bilayer. The Cytoplasmic portion of the chain corresponds to 1038 to 1091 (KCGFFKRSRYDDSIPRYHAVRIRKEEREIKDEKHMDNLEKKQWITKWNENESYS). Cysteine 1039 carries the S-palmitoyl cysteine; by DHHC3 lipid modification. The short motif at 1040 to 1044 (GFFKR) is the GFFKR motif element. Phosphoserine is present on arginine 1064.

This sequence belongs to the integrin alpha chain family. As to quaternary structure, heterodimer of an alpha and a beta subunit. The alpha subunit is composed of a heavy and a light chain linked by a disulfide bond. Alpha-6 associates with either beta-1 (ITGB1) or beta-4 (ITGB4) to form ITGA6:ITGB1 and ITGA6:ITGB4, respectively. ITGA6:ITGB1 is found in a complex with CD9; interaction takes place in oocytes and is involved in sperm-egg fusion. ITGA6:ITGB4 is found in a ternary complex with NRG1 and ERBB3. ITGA6:ITGB4 is found in a ternary complex with IGF1 and IGF1R. ITGA6:ITGB4 interacts with IGF2. Interacts with ADAM9. Interacts with RAB21. Interacts with MDK. ITGA6:ITGB1 interacts with MDK; this interaction mediates MDK-induced neurite outgrowth. Interacts with CD82; this interaction down-regulates ITGA6-mediated cell adhesion. Isoforms containing segment A, but not segment B, are the major targets for PMA-induced phosphorylation. Phosphorylation occurs on 'Ser-1064' of isoform alpha-6X1A. Phosphorylation is not required for the induction of integrin alpha-6A/beta-1 high affinity but may reduce the affinity for ligand. Post-translationally, undergoes PLAU-mediated cleavage at residues Arg-595-596-Arg in a time-dependent manner to produce processed integrin alpha-6 (alpha6p). In terms of processing, palmitoylation by DHHC3 enhances stability and cell surface expression. As to expression, expressed at low levels in normal skin tissue with elevated levels in skin tumors.

It is found in the cell membrane. In terms of biological role, integrin alpha-6/beta-1 (ITGA6:ITGB1) is a receptor for laminin on platelets. Integrin alpha-6/beta-1 (ITGA6:ITGB1) is present in oocytes and is involved in sperm-egg fusion. Integrin alpha-6/beta-4 (ITGA6:ITGB4) is a receptor for laminin in epithelial cells and it plays a critical structural role in the hemidesmosome. ITGA6:ITGB4 binds to NRG1 (via EGF domain) and this binding is essential for NRG1-ERBB signaling. ITGA6:ITGB4 binds to IGF1 and this binding is essential for IGF1 signaling. ITGA6:ITGB4 binds to IGF2 and this binding is essential for IGF2 signaling. This Mus musculus (Mouse) protein is Integrin alpha-6 (Itga6).